Here is a 252-residue protein sequence, read N- to C-terminus: NAP1-related protein 2 (252 aa).

A compositionally biased stretch (basic and acidic residues) spans 1–15; sequence MTAPADKGKKAKTDA. The disordered stretch occupies residues 1-23; sequence MTAPADKGKKAKTDADGGAAEEN. The stretch at 26–67 forms a coiled coil; it reads IDGALVLSIEKLQEIQDELEKVNEEASDKVLEVEQKYSEIRR. A disordered region spans residues 222 to 252; it reads YFNNEAEELGEDDDEEGSDADEGEEDEEEEN. Residues 226–252 are compositionally biased toward acidic residues; it reads EAEELGEDDDEEGSDADEGEEDEEEEN.

Belongs to the nucleosome assembly protein (NAP) family.

The protein resides in the nucleus. It localises to the cytoplasm. Its function is as follows. Acts as a histone H2A/H2B chaperone in nucleosome assembly. This chain is NAP1-related protein 2, found in Oryza sativa subsp. indica (Rice).